We begin with the raw amino-acid sequence, 877 residues long: Phosphoenolpyruvate carboxylase (877 aa).

Catalysis depends on residues His-138 and Lys-544.

This sequence belongs to the PEPCase type 1 family. The cofactor is Mg(2+).

The enzyme catalyses oxaloacetate + phosphate = phosphoenolpyruvate + hydrogencarbonate. Forms oxaloacetate, a four-carbon dicarboxylic acid source for the tricarboxylic acid cycle. This is Phosphoenolpyruvate carboxylase from Vibrio parahaemolyticus serotype O3:K6 (strain RIMD 2210633).